The primary structure comprises 457 residues: Multidrug resistance protein MdtK (457 aa).

Helical transmembrane passes span 11-31 (LLALGIPVIIAQFSQTAMGVV), 53-73 (IWLPTILLGQGILMALTPIVA), 93-113 (WLATFLSIMVIAILYNSRFII), 127-147 (AIGFIHAIMWGAPGCLYYQVL), 160-180 (GMIIGFIGLLINIPVNYAFIY), 188-208 (LGGIGCGVATASVFWAMFLMM), 243-263 (LPVGLALFFEVTLFAVVALLV), 276-296 (IALNFSSLMFMFPLSLGIAAT), 316-336 (ITALAVGLMLASCTAIFSIIF), 357-377 (LMLFAALYQLSDSVQVIGSGV), 387-407 (IFFITFIAYWVIGLPSGYLLG), and 416-436 (MGPAGFWIGFILGLTASAIMM).

Belongs to the multi antimicrobial extrusion (MATE) (TC 2.A.66.1) family. MdtK subfamily.

It localises to the cell inner membrane. Its function is as follows. Multidrug efflux pump that functions probably as a Na(+)/drug antiporter. The chain is Multidrug resistance protein MdtK from Proteus mirabilis (strain HI4320).